The sequence spans 130 residues: Small ribosomal subunit protein uS9 (130 aa).

Residues 98–130 (LKRAGLLTRDPRMKERKKPGLKKARRSPQFSKR) form a disordered region. Residues 111–130 (KERKKPGLKKARRSPQFSKR) are compositionally biased toward basic residues.

The protein belongs to the universal ribosomal protein uS9 family.

This chain is Small ribosomal subunit protein uS9, found in Staphylococcus saprophyticus subsp. saprophyticus (strain ATCC 15305 / DSM 20229 / NCIMB 8711 / NCTC 7292 / S-41).